The primary structure comprises 1036 residues: Serine/threonine-protein kinase ULK2 (1036 aa).

The Protein kinase domain occupies 9–271 (YSKRDLVGHG…FEAFFSHPFL (263 aa)). ATP is bound by residues 15–23 (VGHGAFAVV) and K39. Catalysis depends on D131, which acts as the Proton acceptor. Disordered regions lie at residues 319–348 (ENLSSPPLGPPNYLQVSKDSASTSSKNSSC), 418–460 (TSTA…ADTA), 491–522 (CCCGHPQGHDSRSRNSSGSPVPQAQSPQSLLS), 540–588 (QKLR…SSDW), and 656–695 (AEQQSKAVFGRSVSTGKLSDQQGKTPICRHQGSTDSLNTE). Residues 335-348 (SKDSASTSSKNSSC) are compositionally biased toward low complexity. Residues 418-428 (TSTASSGTNVH) show a composition bias toward polar residues. S430 carries the post-translational modification Phosphoserine. Positions 504–521 (RNSSGSPVPQAQSPQSLL) are enriched in polar residues. Positions 659 to 679 (QSKAVFGRSVSTGKLSDQQGK) are enriched in polar residues. Phosphoserine occurs at positions 771 and 780. The interval 812-1036 (ELPEETLMER…SALCHSTATV (225 aa)) is CTD-like region.

Belongs to the protein kinase superfamily. Ser/Thr protein kinase family. APG1/unc-51/ULK1 subfamily. As to quaternary structure, interacts with SYNGAP1. Component of a complex consisting of ATG13/KIAA0652, ULK1 and RB1CC1/FIP200. Interacts (via C-terminus) with ATG13/KIAA0652. Associates with the mammalian target of rapamycin complex 1 (mTORC1) through an interaction with RPTOR. Autophosphorylated. In response to nutrient limitation, probably phosphorylated and activated by AMPK, leading to activate autophagy.

The protein resides in the cytoplasmic vesicle membrane. The enzyme catalyses L-seryl-[protein] + ATP = O-phospho-L-seryl-[protein] + ADP + H(+). It carries out the reaction L-threonyl-[protein] + ATP = O-phospho-L-threonyl-[protein] + ADP + H(+). In terms of biological role, serine/threonine-protein kinase involved in autophagy in response to starvation. Acts upstream of phosphatidylinositol 3-kinase PIK3C3 to regulate the formation of autophagophores, the precursors of autophagosomes. Part of regulatory feedback loops in autophagy: acts both as a downstream effector and a negative regulator of mammalian target of rapamycin complex 1 (mTORC1) via interaction with RPTOR. Activated via phosphorylation by AMPK, also acts as a negative regulator of AMPK through phosphorylation of the AMPK subunits PRKAA1, PRKAB2 and PRKAG1. May phosphorylate ATG13/KIAA0652, FRS2, FRS3 and RPTOR; however such data need additional evidences. Not involved in ammonia-induced autophagy or in autophagic response of cerebellar granule neurons (CGN) to low potassium concentration. Plays a role early in neuronal differentiation and is required for granule cell axon formation: may govern axon formation via Ras-like GTPase signaling and through regulation of the Rab5-mediated endocytic pathways within developing axons. The polypeptide is Serine/threonine-protein kinase ULK2 (ULK2) (Homo sapiens (Human)).